The chain runs to 357 residues: DNA integrity scanning protein DisA (357 aa).

In terms of domain architecture, DAC spans 8–146 (VKSMINILQL…GNLRYTLKDI (139 aa)). ATP contacts are provided by residues Gly-75, Leu-93, and 106 to 110 (MRHRT).

The protein belongs to the DisA family. As to quaternary structure, homooctamer. The cofactor is Mg(2+).

The catalysed reaction is 2 ATP = 3',3'-c-di-AMP + 2 diphosphate. In terms of biological role, participates in a DNA-damage check-point that is active prior to asymmetric division when DNA is damaged. DisA forms globular foci that rapidly scan along the chromosomes during sporulation, searching for lesions. When a lesion is present, DisA pauses at the lesion site. This triggers a cellular response that culminates in a temporary block in sporulation initiation. Its function is as follows. Also has diadenylate cyclase activity, catalyzing the condensation of 2 ATP molecules into cyclic di-AMP (c-di-AMP). c-di-AMP acts as a signaling molecule that couples DNA integrity with progression of sporulation. The rise in c-di-AMP level generated by DisA while scanning the chromosome, operates as a positive signal that advances sporulation; upon encountering a lesion, the DisA focus arrests at the damaged site and halts c-di-AMP synthesis. The chain is DNA integrity scanning protein DisA from Bacillus cereus (strain AH187).